A 55-amino-acid chain; its full sequence is Large ribosomal subunit protein bL33 (55 aa).

The protein belongs to the bacterial ribosomal protein bL33 family.

This Pectobacterium carotovorum subsp. carotovorum (strain PC1) protein is Large ribosomal subunit protein bL33.